The primary structure comprises 432 residues: Probable cysteine protease ATG4 (432 aa).

The tract at residues 74-97 is disordered; the sequence is SRDTQAALSKPATPPHQLGIQRSK. Cys160 serves as the catalytic Nucleophile. Residues Asp332 and His334 contribute to the active site.

This sequence belongs to the peptidase C54 family.

It is found in the cytoplasm. The protein resides in the nucleus. The protein localises to the preautophagosomal structure. The enzyme catalyses [protein]-C-terminal L-amino acid-glycyl-phosphatidylethanolamide + H2O = [protein]-C-terminal L-amino acid-glycine + a 1,2-diacyl-sn-glycero-3-phosphoethanolamine. In terms of biological role, cysteine protease that plays a key role in cytoplasm to vacuole transport (Cvt) and autophagy by mediating both proteolytic activation and delipidation of ATG8. Required for selective autophagic degradation of the nucleus (nucleophagy) as well as for mitophagy which contributes to regulate mitochondrial quantity and quality by eliminating the mitochondria to a basal level to fulfill cellular energy requirements and preventing excess ROS production. The protease activity is required for proteolytic activation of ATG8: cleaves the C-terminal amino acid of ATG8 to reveal a C-terminal glycine. ATG8 ubiquitin-like activity requires the exposure of the glycine at the C-terminus for its conjugation to phosphatidylethanolamine (PE) and its insertion to membranes, which is necessary for autophagy. The ATG8-PE conjugate mediates tethering between adjacent membranes and stimulates membrane hemifusion, leading to expansion of the autophagosomal membrane during autophagy. In addition to the protease activity, also catalyzes deconjugation of PE-conjugated forms of ATG8 during macroautophagy: ATG8 delipidation is required to release the protein from membranes, which facilitates multiple events during macroautophagy, and especially for efficient autophagosome biogenesis, the assembly of ATG9-containing tubulovesicular clusters into phagophores/autophagosomes, and for the disassembly of PAS-associated ATG components. ATG8 delipidation by ATG4 also recycles ATG8-PE generated on inappropriate membranes to maintain a reservoir of unlipidated ATG8 that is required for autophagosome formation at the PAS. This Coccidioides immitis (strain RS) (Valley fever fungus) protein is Probable cysteine protease ATG4 (ATG4).